The primary structure comprises 184 residues: MITEGAARRVHIIQGEYKVLSDPNAVLSTILGSCVAACLRDPVAGIGGMNHFLLPGSATSPTSGGDATRYGVHLMELLINGLLKQGARRDRLEAKIFGGAKTISTFSNVGEQNAAFAMQFLRDEGIPVVGSSTGGEHGRKLEYWPVSGRARQYPLTGAETQRTVALEQRPAAPQKPVETSIEFF.

Belongs to the CheD family.

It catalyses the reaction L-glutaminyl-[protein] + H2O = L-glutamyl-[protein] + NH4(+). In terms of biological role, probably deamidates glutamine residues to glutamate on methyl-accepting chemotaxis receptors (MCPs), playing an important role in chemotaxis. This chain is Probable chemoreceptor glutamine deamidase CheD, found in Rhizobium etli (strain CIAT 652).